A 179-amino-acid polypeptide reads, in one-letter code: Large ribosomal subunit protein uL6 (179 aa).

The protein belongs to the universal ribosomal protein uL6 family. In terms of assembly, part of the 50S ribosomal subunit.

This protein binds to the 23S rRNA, and is important in its secondary structure. It is located near the subunit interface in the base of the L7/L12 stalk, and near the tRNA binding site of the peptidyltransferase center. This chain is Large ribosomal subunit protein uL6, found in Chlorobium limicola (strain DSM 245 / NBRC 103803 / 6330).